The following is a 282-amino-acid chain: Protein-glutamine deamidase Cif (282 aa).

Positions 1–16 are translocation domain (TD); that stretch reads MKDITLPPPTSASCLT. Residues cysteine 109, histidine 165, and glutamine 185 contribute to the active site.

This sequence belongs to the Cif family.

It is found in the secreted. The protein localises to the host nucleus. It carries out the reaction L-glutaminyl-[protein] + H2O = L-glutamyl-[protein] + NH4(+). Protein-glutamine deamidase effector that inhibits the host cell cycle and other key cellular processes such as the actin network and programmed-cell death. Acts by mediating the side chain deamidation of 'Gln-40' of host NEDD8, converting it to glutamate, thereby abolishing the activity of cullin-RING-based E3 ubiquitin-protein ligase complexes (CRL complexes). Inactivation of CRL complexes prevents ubiquitination and subsequent degradation of the cyclin-dependent kinase inhibitors CDKN1A/p21 and CDKN1B/p27, leading to G1 and G2 cell cycle arrests in host cells. Also able to catalyze deamidation of 'Gln-40' of host ubiquitin in vitro; however, NEDD8 constitutes the preferred substrate in vivo. This chain is Protein-glutamine deamidase Cif, found in Escherichia coli.